The sequence spans 201 residues: ATP-dependent Clp protease proteolytic subunit (201 aa).

Residue serine 98 is the Nucleophile of the active site. Histidine 123 is a catalytic residue.

It belongs to the peptidase S14 family. In terms of assembly, fourteen ClpP subunits assemble into 2 heptameric rings which stack back to back to give a disk-like structure with a central cavity, resembling the structure of eukaryotic proteasomes.

The protein localises to the cytoplasm. It carries out the reaction Hydrolysis of proteins to small peptides in the presence of ATP and magnesium. alpha-casein is the usual test substrate. In the absence of ATP, only oligopeptides shorter than five residues are hydrolyzed (such as succinyl-Leu-Tyr-|-NHMec, and Leu-Tyr-Leu-|-Tyr-Trp, in which cleavage of the -Tyr-|-Leu- and -Tyr-|-Trp bonds also occurs).. In terms of biological role, cleaves peptides in various proteins in a process that requires ATP hydrolysis. Has a chymotrypsin-like activity. Plays a major role in the degradation of misfolded proteins. This Rickettsia felis (strain ATCC VR-1525 / URRWXCal2) (Rickettsia azadi) protein is ATP-dependent Clp protease proteolytic subunit.